A 154-amino-acid polypeptide reads, in one-letter code: Myoglobin (154 aa).

Positions 2–148 constitute a Globin domain; it reads GLSDGEWQLV…FRNDIAAKYK (147 aa). Ser-4 carries the phosphoserine modification. His-65 is a binding site for nitrite. Position 65 (His-65) interacts with O2. The residue at position 68 (Thr-68) is a Phosphothreonine. His-94 lines the heme b pocket.

The protein belongs to the globin family. As to quaternary structure, monomeric.

It localises to the cytoplasm. The protein resides in the sarcoplasm. The catalysed reaction is Fe(III)-heme b-[protein] + nitric oxide + H2O = Fe(II)-heme b-[protein] + nitrite + 2 H(+). The enzyme catalyses H2O2 + AH2 = A + 2 H2O. Functionally, monomeric heme protein which primary function is to store oxygen and facilitate its diffusion within muscle tissues. Reversibly binds oxygen through a pentacoordinated heme iron and enables its timely and efficient release as needed during periods of heightened demand. Depending on the oxidative conditions of tissues and cells, and in addition to its ability to bind oxygen, it also has a nitrite reductase activity whereby it regulates the production of bioactive nitric oxide. Under stress conditions, like hypoxia and anoxia, it also protects cells against reactive oxygen species thanks to its pseudoperoxidase activity. The sequence is that of Myoglobin (MB) from Proechimys guairae (Guaira spiny rat).